A 111-amino-acid chain; its full sequence is 2Fe-2S ferredoxin (111 aa).

Residues 1–104 (MPKIFFLPHK…DIEVQIPLYN (104 aa)) enclose the 2Fe-2S ferredoxin-type domain. C42, C48, C51, and C87 together coordinate [2Fe-2S] cluster.

The protein belongs to the adrenodoxin/putidaredoxin family. It depends on [2Fe-2S] cluster as a cofactor.

Its function is as follows. Ferredoxin are iron-sulfur proteins that transfer electrons in a wide variety of metabolic reactions. This Buchnera aphidicola subsp. Schizaphis graminum (strain Sg) protein is 2Fe-2S ferredoxin (fdx).